The sequence spans 142 residues: Large ribosomal subunit protein uL13 (142 aa).

It belongs to the universal ribosomal protein uL13 family. Part of the 50S ribosomal subunit.

In terms of biological role, this protein is one of the early assembly proteins of the 50S ribosomal subunit, although it is not seen to bind rRNA by itself. It is important during the early stages of 50S assembly. In Baumannia cicadellinicola subsp. Homalodisca coagulata, this protein is Large ribosomal subunit protein uL13.